Reading from the N-terminus, the 940-residue chain is Isoleucine--tRNA ligase (940 aa).

Positions 58 to 68 (PYANGSIHIGH) match the 'HIGH' region motif. E563 serves as a coordination point for L-isoleucyl-5'-AMP. The 'KMSKS' region motif lies at 604–608 (KMSKS). K607 is a binding site for ATP. Zn(2+)-binding residues include C902, C905, C922, and C925.

This sequence belongs to the class-I aminoacyl-tRNA synthetase family. IleS type 1 subfamily. As to quaternary structure, monomer. The cofactor is Zn(2+).

The protein resides in the cytoplasm. The enzyme catalyses tRNA(Ile) + L-isoleucine + ATP = L-isoleucyl-tRNA(Ile) + AMP + diphosphate. In terms of biological role, catalyzes the attachment of isoleucine to tRNA(Ile). As IleRS can inadvertently accommodate and process structurally similar amino acids such as valine, to avoid such errors it has two additional distinct tRNA(Ile)-dependent editing activities. One activity is designated as 'pretransfer' editing and involves the hydrolysis of activated Val-AMP. The other activity is designated 'posttransfer' editing and involves deacylation of mischarged Val-tRNA(Ile). This chain is Isoleucine--tRNA ligase, found in Marinomonas sp. (strain MWYL1).